Consider the following 123-residue polypeptide: Small ribosomal subunit protein uS12 (123 aa).

A disordered region spans residues 1-23 (MPTISQLVKKGREKVEKKTKSPA). Position 89 is a 3-methylthioaspartic acid (Asp89).

It belongs to the universal ribosomal protein uS12 family. As to quaternary structure, part of the 30S ribosomal subunit. Contacts proteins S8 and S17. May interact with IF1 in the 30S initiation complex.

Its function is as follows. With S4 and S5 plays an important role in translational accuracy. In terms of biological role, interacts with and stabilizes bases of the 16S rRNA that are involved in tRNA selection in the A site and with the mRNA backbone. Located at the interface of the 30S and 50S subunits, it traverses the body of the 30S subunit contacting proteins on the other side and probably holding the rRNA structure together. The combined cluster of proteins S8, S12 and S17 appears to hold together the shoulder and platform of the 30S subunit. The polypeptide is Small ribosomal subunit protein uS12 (Thermodesulfovibrio yellowstonii (strain ATCC 51303 / DSM 11347 / YP87)).